The sequence spans 246 residues: Zinc import ATP-binding protein ZnuC (246 aa).

In terms of domain architecture, ABC transporter spans Leu-24–Ile-244. Gly-56–Thr-63 contacts ATP.

The protein belongs to the ABC transporter superfamily. Zinc importer (TC 3.A.1.15.5) family. The complex is composed of two ATP-binding proteins (ZnuC), two transmembrane proteins (ZnuB) and a solute-binding protein (ZnuA).

The protein localises to the cell membrane. It catalyses the reaction Zn(2+)(out) + ATP(in) + H2O(in) = Zn(2+)(in) + ADP(in) + phosphate(in) + H(+)(in). Its function is as follows. Part of the ABC transporter complex ZnuABC involved in zinc import. Responsible for energy coupling to the transport system. The sequence is that of Zinc import ATP-binding protein ZnuC from Wolbachia sp. subsp. Brugia malayi (strain TRS).